The primary structure comprises 717 residues: PAN2-PAN3 deadenylation complex subunit PAN3 (717 aa).

Residues 8–37 (WARDVPCRNVIIYGFCKKKTEGCPFKHDDD) form a C3H1-type zinc finger. The interval 37-100 (DDIATPTSTP…HTGSKSQVPK (64 aa)) is disordered. Positions 62-90 (PSKISVSSLPSLNSQPSSTAPTSAPNATA) are enriched in low complexity. Residues 91–100 (HTGSKSQVPK) show a composition bias toward polar residues. The interval 323–585 (QLFPSGGNLP…ATIIEKYIGL (263 aa)) is pseudokinase domain. ATP is bound by residues Arg378, 428 to 435 (DYYPNATS), and 482 to 483 (DK). The stretch at 586–624 (DVVFKVMEAQQTYSEYAENVLSRELENGRLFRLICKLNF) forms a coiled coil. The knob domain stretch occupies residues 625–717 (IFGRVENRLD…VDKTFRAMTL (93 aa)).

Belongs to the protein kinase superfamily. PAN3 family. In terms of assembly, homodimer. Forms a heterotrimer with a catalytic subunit PAN2 to form the poly(A)-nuclease (PAN) deadenylation complex. Interacts (via PAM-2 motif) with poly(A)-binding protein PAB1 (via PABC domain), conferring substrate specificity of the enzyme complex.

It localises to the cytoplasm. Its function is as follows. Regulatory subunit of the poly(A)-nuclease (PAN) deadenylation complex, one of two cytoplasmic mRNA deadenylases involved in mRNA turnover. PAN specifically shortens poly(A) tails of RNA and the activity is stimulated by poly(A)-binding protein PAB1. PAN deadenylation is followed by rapid degradation of the shortened mRNA tails by the CCR4-NOT complex. Deadenylated mRNAs are then degraded by two alternative mechanisms, namely exosome-mediated 3'-5' exonucleolytic degradation, or deadenylation-dependent mRNA decaping and subsequent 5'-3' exonucleolytic degradation by XRN1. May also be involved in post-transcriptional maturation of mRNA poly(A) tails. PAN3 acts as a positive regulator for PAN activity, recruiting the catalytic subunit PAN2 to mRNA via its interaction with RNA and with PAB1. This is PAN2-PAN3 deadenylation complex subunit PAN3 from Candida glabrata (strain ATCC 2001 / BCRC 20586 / JCM 3761 / NBRC 0622 / NRRL Y-65 / CBS 138) (Yeast).